We begin with the raw amino-acid sequence, 852 residues long: Pentatricopeptide repeat-containing protein At5g02830, chloroplastic (852 aa).

A chloroplast-targeting transit peptide spans 1-25 (MRDFVIVFGSSSAITNPHHHHRRCY). The interval 17–60 (PHHHHRRCYATAPESNRKTKSNSSFTKLLPSLPQQHSPSPASVS) is disordered. Over residues 44–58 (LLPSLPQQHSPSPAS) the composition is skewed to low complexity. 8 PPR repeats span residues 334-364 (DMTSYNILLKTCCLAGRVDLAQDIYKEAKRM), 373-407 (DAFTYCTIIKVFADAKMWKWALKVKDDMKSVGVTP), 408-442 (NTHTWSSLISACANAGLVEQANHLFEEMLASGCEP), 443-477 (NSQCFNILLHACVEACQYDRAFRLFQSWKGSSVNE), 525-557 (TTATYNILLKACGTDYYRGKELMDEMKSLGLSP), 558-592 (NQITWSTLIDMCGGSGDVEGAVRILRTMHSAGTRP), 593-627 (DVVAYTTAIKICAENKCLKLAFSLFEEMRRYQIKP), and 628-665 (NWVTYNTLLKARSKYGSLLEVRQCLAIYQDMRNAGYKP).

Belongs to the PPR family. P subfamily.

It is found in the plastid. Its subcellular location is the chloroplast. The chain is Pentatricopeptide repeat-containing protein At5g02830, chloroplastic from Arabidopsis thaliana (Mouse-ear cress).